We begin with the raw amino-acid sequence, 408 residues long: MKILTLNTGSSSLKFTLYQHKNTQILASGTIEKIKTKKSIIRIKTQNDLLEKIDKHIKSHKEALKQLIKILTNKKLNIINNLNEIQGIGHRIVHGGPNFKNSVILNENILSELEKISALAPLHNPTAIKVIEITLKIFPNAKQVLCFDTSWHQTMNENAFLYATPYSWYKDYNIRKYGFHGLSYAYITKRVATILNKHKKDLNLIILHLGNGSSINAVKKGISYDTSMGLTPLEGLAMGTRSGDIDPAIIPLMSKVLNKTPRKIEEILNKESGMLGISLKSNDLRDIWEGVENNEYNSKLAVEIMAYRIKKYIGSYLAILEFNIDAIVFTAGIGVTDYGIRELSLKGFEKIGIEIDLQKNNLAREKNIESDISSEKSKTKILVIPTNEELTILEDTYNLITEHSRDLK.

Asn7 provides a ligand contact to Mg(2+). Lys14 lines the ATP pocket. Arg91 lines the substrate pocket. Asp148 serves as the catalytic Proton donor/acceptor. Residues 208 to 212 (HLGNG) and 283 to 285 (DLR) contribute to the ATP site. Glu388 is a binding site for Mg(2+).

It belongs to the acetokinase family. Homodimer. Requires Mg(2+) as cofactor. The cofactor is Mn(2+).

The protein localises to the cytoplasm. It catalyses the reaction acetate + ATP = acetyl phosphate + ADP. The protein operates within metabolic intermediate biosynthesis; acetyl-CoA biosynthesis; acetyl-CoA from acetate: step 1/2. Functionally, catalyzes the formation of acetyl phosphate from acetate and ATP. Can also catalyze the reverse reaction. In Borrelia hermsii (strain HS1 / DAH), this protein is Acetate kinase.